Reading from the N-terminus, the 746-residue chain is EF-hand domain-containing family member C2 (746 aa).

DM10 domains are found at residues 75-182 (DKQV…RKMG), 226-367 (DGHV…RTKY), and 429-536 (ESNT…EKHA). Residues 557-592 (PRSREIRQVFAAADPQHTKVIEYDPFRNLIVSITDG) form the EF-hand domain.

It localises to the cytoplasm. The protein resides in the cytoskeleton. Its subcellular location is the cilium axoneme. Its function is as follows. Microtubule inner protein (MIP) part of the dynein-decorated doublet microtubules (DMTs) in cilia axoneme, which is required for motile cilia beating. This chain is EF-hand domain-containing family member C2 (EFHC2), found in Gallus gallus (Chicken).